Reading from the N-terminus, the 486-residue chain is 23S rRNA (uracil(1939)-C(5))-methyltransferase RlmD (486 aa).

In terms of domain architecture, TRAM spans 14 to 76 (AAQDGSGLPE…NHWEQANLTA (63 aa)). [4Fe-4S] cluster-binding residues include Cys89, Cys99, Cys102, and Cys181. Positions 289, 318, 323, 339, 374, and 395 each coordinate S-adenosyl-L-methionine. The active-site Nucleophile is the Cys442.

Belongs to the class I-like SAM-binding methyltransferase superfamily. RNA M5U methyltransferase family. RlmD subfamily.

The catalysed reaction is uridine(1939) in 23S rRNA + S-adenosyl-L-methionine = 5-methyluridine(1939) in 23S rRNA + S-adenosyl-L-homocysteine + H(+). Functionally, catalyzes the formation of 5-methyl-uridine at position 1939 (m5U1939) in 23S rRNA. In Verminephrobacter eiseniae (strain EF01-2), this protein is 23S rRNA (uracil(1939)-C(5))-methyltransferase RlmD.